The chain runs to 95 residues: Co-chaperonin GroES (95 aa).

The protein belongs to the GroES chaperonin family. In terms of assembly, heptamer of 7 subunits arranged in a ring. Interacts with the chaperonin GroEL.

It is found in the cytoplasm. Functionally, together with the chaperonin GroEL, plays an essential role in assisting protein folding. The GroEL-GroES system forms a nano-cage that allows encapsulation of the non-native substrate proteins and provides a physical environment optimized to promote and accelerate protein folding. GroES binds to the apical surface of the GroEL ring, thereby capping the opening of the GroEL channel. This Vesicomyosocius okutanii subsp. Calyptogena okutanii (strain HA) protein is Co-chaperonin GroES.